The primary structure comprises 292 residues: 4-diphosphocytidyl-2-C-methyl-D-erythritol kinase (292 aa).

The active site involves Lys11. 95-105 is a binding site for ATP; the sequence is PVSAGLAGGSS. Asp137 is a catalytic residue.

The protein belongs to the GHMP kinase family. IspE subfamily.

It carries out the reaction 4-CDP-2-C-methyl-D-erythritol + ATP = 4-CDP-2-C-methyl-D-erythritol 2-phosphate + ADP + H(+). It functions in the pathway isoprenoid biosynthesis; isopentenyl diphosphate biosynthesis via DXP pathway; isopentenyl diphosphate from 1-deoxy-D-xylulose 5-phosphate: step 3/6. Its function is as follows. Catalyzes the phosphorylation of the position 2 hydroxy group of 4-diphosphocytidyl-2C-methyl-D-erythritol. This Alkaliphilus oremlandii (strain OhILAs) (Clostridium oremlandii (strain OhILAs)) protein is 4-diphosphocytidyl-2-C-methyl-D-erythritol kinase.